The following is a 216-amino-acid chain: ATP-dependent Clp protease proteolytic subunit (216 aa).

S101 acts as the Nucleophile in catalysis. Residue H126 is part of the active site.

The protein belongs to the peptidase S14 family. In terms of assembly, component of the chloroplastic Clp protease core complex.

The protein resides in the plastid. The protein localises to the chloroplast stroma. It carries out the reaction Hydrolysis of proteins to small peptides in the presence of ATP and magnesium. alpha-casein is the usual test substrate. In the absence of ATP, only oligopeptides shorter than five residues are hydrolyzed (such as succinyl-Leu-Tyr-|-NHMec, and Leu-Tyr-Leu-|-Tyr-Trp, in which cleavage of the -Tyr-|-Leu- and -Tyr-|-Trp bonds also occurs).. In terms of biological role, cleaves peptides in various proteins in a process that requires ATP hydrolysis. Has a chymotrypsin-like activity. Plays a major role in the degradation of misfolded proteins. The sequence is that of ATP-dependent Clp protease proteolytic subunit from Triticum aestivum (Wheat).